A 428-amino-acid chain; its full sequence is 5'-deoxyadenosine deaminase (428 aa).

Zn(2+) contacts are provided by histidine 59 and histidine 61. Substrate-binding residues include glutamate 88 and histidine 180. Histidine 207 is a binding site for Zn(2+). Substrate contacts are provided by glutamate 210 and aspartate 296. Aspartate 296 lines the Zn(2+) pocket.

It belongs to the metallo-dependent hydrolases superfamily. MTA/SAH deaminase family. Homotetramer. The cofactor is Zn(2+).

The enzyme catalyses 5'-deoxyadenosine + H2O + H(+) = 5'-deoxyinosine + NH4(+). The catalysed reaction is S-adenosyl-L-homocysteine + H2O + H(+) = S-inosyl-L-homocysteine + NH4(+). It carries out the reaction S-methyl-5'-thioadenosine + H2O + H(+) = S-methyl-5'-thioinosine + NH4(+). It catalyses the reaction adenosine + H2O + H(+) = inosine + NH4(+). It functions in the pathway amino-acid biosynthesis; S-adenosyl-L-methionine biosynthesis. Functionally, catalyzes the deamination of three SAM-derived enzymatic products, namely 5'-deoxyadenosine, S-adenosyl-L-homocysteine, and 5'-methylthioadenosine, to produce the inosine analogs. Can also deaminate adenosine. The preferred substrate for this enzyme is 5'-deoxyadenosine, but all these substrates are efficiently deaminated. Likely functions in a S-adenosyl-L-methionine (SAM) recycling pathway from S-adenosyl-L-homocysteine (SAH) produced from SAM-dependent methylation reactions. May also be involved in the recycling of 5'-deoxyadenosine, whereupon the 5'-deoxyribose moiety of 5'-deoxyinosine is further metabolized to deoxyhexoses used for the biosynthesis of aromatic amino acids in methanogens. The polypeptide is 5'-deoxyadenosine deaminase (Methanococcus aeolicus (strain ATCC BAA-1280 / DSM 17508 / OCM 812 / Nankai-3)).